A 317-amino-acid chain; its full sequence is Probable RuBisCO transcriptional regulator (317 aa).

The region spanning 6 to 63 is the HTH lysR-type domain; sequence FTLDQLRILRAILIQGSFKKAATSLYISQPAVSSHVHNIEKQLNIQLFDRSHRNAQLT. A DNA-binding region (H-T-H motif) is located at residues 23–42; it reads FKKAATSLYISQPAVSSHVH.

It belongs to the LysR transcriptional regulatory family.

Its subcellular location is the plastid. The protein localises to the chloroplast. Its function is as follows. Trans-acting transcriptional regulator of RuBisCO genes (rbcL and rbcS) expression. The sequence is that of Probable RuBisCO transcriptional regulator (rbcR) from Cyanidium caldarium (Red alga).